A 131-amino-acid polypeptide reads, in one-letter code: Profilin-2 (131 aa).

It belongs to the profilin family. Occurs in many kinds of cells as a complex with monomeric actin in a 1:1 ratio.

It is found in the cytoplasm. The protein localises to the cytoskeleton. In terms of biological role, binds to actin and affects the structure of the cytoskeleton. At high concentrations, profilin prevents the polymerization of actin, whereas it enhances it at low concentrations. By binding to PIP2, it inhibits the formation of IP3 and DG. The sequence is that of Profilin-2 (PRO2) from Triticum aestivum (Wheat).